Consider the following 598-residue polypeptide: Fumarate reductase flavoprotein subunit (598 aa).

FAD-binding positions include 12 to 16, 36 to 38, 44 to 52, 156 to 158, and Asp-212; these read GAGGA, ISK, SHTVAAEGG, and HFV. His-45 carries the tele-8alpha-FAD histidine modification. Catalysis depends on residues His-233 and Arg-249. Residues 356–357, Glu-380, and 391–397 each bind FAD; these read HY and RLGSNSL. Residues 577-598 form a disordered region; sequence AKRVYGGEATAQDKQNKEKANG.

Belongs to the FAD-dependent oxidoreductase 2 family. FRD/SDH subfamily. Part of an enzyme complex containing four subunits: a flavoprotein (FrdA), an iron-sulfur protein (FrdB), and two hydrophobic anchor proteins (FrdC and FrdD). The cofactor is FAD.

The protein localises to the cell inner membrane. It catalyses the reaction a quinone + succinate = fumarate + a quinol. The catalysed reaction is a menaquinone + succinate = a menaquinol + fumarate. In terms of biological role, two distinct, membrane-bound, FAD-containing enzymes are responsible for the catalysis of fumarate and succinate interconversion; the fumarate reductase is used in anaerobic growth, and the succinate dehydrogenase is used in aerobic growth. This chain is Fumarate reductase flavoprotein subunit (frdA), found in Proteus vulgaris.